The chain runs to 915 residues: Probable LRR receptor-like serine/threonine-protein kinase At2g16250 (915 aa).

An N-terminal signal peptide occupies residues 1 to 28 (MVDQRRSALGFVLLLLCLVLFFDCVVVG). The Extracellular portion of the chain corresponds to 29–451 (QTQSRFSEKL…ISRRTVIILA (423 aa)). Residues Asn71, Asn78, Asn101, Asn109, Asn150, Asn158, and Asn177 are each glycosylated (N-linked (GlcNAc...) asparagine). LRR repeat units lie at residues 102–125 (LTRL…WFGV), 127–150 (LLAL…TLGN), 151–174 (LTSL…SLGQ), 176–198 (LNLS…SFSS), 199–223 (LKNL…LGAL), 225–247 (KLIH…LGDL), 248–271 (VNLV…LRKL), 272–295 (SKLQ…LFSA), 297–320 (SQLQ…CWSL), 321–344 (PKLR…SYDS), and 366–390 (LRRF…VTGE). N-linked (GlcNAc...) asparagine glycosylation occurs at Asn230. An N-linked (GlcNAc...) asparagine glycan is attached at Asn332. 3 N-linked (GlcNAc...) asparagine glycosylation sites follow: Asn391, Asn429, and Asn437. The chain crosses the membrane as a helical span at residues 452–472 (AVGGGVAFILLFVILPIILVL). The Cytoplasmic portion of the chain corresponds to 473-915 (CMRHRRRAAQ…AAYGVVEDNL (443 aa)). The disordered stretch occupies residues 482 to 503 (QRGNNDRPKPAGEASQQPPKGA). The region spanning 527–811 (FNDANLIKRG…IVNALENPLK (285 aa)) is the Protein kinase domain. ATP contacts are provided by residues 533 to 541 (IKRGHSGNL) and Lys555. Asp657 functions as the Proton acceptor in the catalytic mechanism. The interval 851 to 915 (TAVQAGATTS…AAYGVVEDNL (65 aa)) is disordered. Over residues 859 to 870 (TSGGGGGGGGNG) the composition is skewed to gly residues. The segment covering 871–892 (LRNSGSQGSSGRNNNNNGNSSS) has biased composition (low complexity).

The protein belongs to the protein kinase superfamily. Ser/Thr protein kinase family.

Its subcellular location is the membrane. The enzyme catalyses L-seryl-[protein] + ATP = O-phospho-L-seryl-[protein] + ADP + H(+). It catalyses the reaction L-threonyl-[protein] + ATP = O-phospho-L-threonyl-[protein] + ADP + H(+). This chain is Probable LRR receptor-like serine/threonine-protein kinase At2g16250, found in Arabidopsis thaliana (Mouse-ear cress).